A 139-amino-acid polypeptide reads, in one-letter code: Phosphoribosyl-AMP cyclohydrolase (139 aa).

Aspartate 91 provides a ligand contact to Mg(2+). Cysteine 92 serves as a coordination point for Zn(2+). Positions 93 and 95 each coordinate Mg(2+). Residues cysteine 110 and cysteine 117 each contribute to the Zn(2+) site.

This sequence belongs to the PRA-CH family. As to quaternary structure, homodimer. Mg(2+) is required as a cofactor. It depends on Zn(2+) as a cofactor.

It is found in the cytoplasm. It catalyses the reaction 1-(5-phospho-beta-D-ribosyl)-5'-AMP + H2O = 1-(5-phospho-beta-D-ribosyl)-5-[(5-phospho-beta-D-ribosylamino)methylideneamino]imidazole-4-carboxamide. It participates in amino-acid biosynthesis; L-histidine biosynthesis; L-histidine from 5-phospho-alpha-D-ribose 1-diphosphate: step 3/9. Functionally, catalyzes the hydrolysis of the adenine ring of phosphoribosyl-AMP. This chain is Phosphoribosyl-AMP cyclohydrolase, found in Brucella abortus (strain S19).